A 597-amino-acid chain; its full sequence is Elongation factor 4 (597 aa).

Residues 2-184 (QHIRNFSIIA…AVISRIPPPK (183 aa)) form the tr-type G domain. Residues 14–19 (DHGKST) and 131–134 (NKID) contribute to the GTP site.

The protein belongs to the TRAFAC class translation factor GTPase superfamily. Classic translation factor GTPase family. LepA subfamily.

Its subcellular location is the cell inner membrane. The enzyme catalyses GTP + H2O = GDP + phosphate + H(+). Its function is as follows. Required for accurate and efficient protein synthesis under certain stress conditions. May act as a fidelity factor of the translation reaction, by catalyzing a one-codon backward translocation of tRNAs on improperly translocated ribosomes. Back-translocation proceeds from a post-translocation (POST) complex to a pre-translocation (PRE) complex, thus giving elongation factor G a second chance to translocate the tRNAs correctly. Binds to ribosomes in a GTP-dependent manner. In Nitrosospira multiformis (strain ATCC 25196 / NCIMB 11849 / C 71), this protein is Elongation factor 4.